Reading from the N-terminus, the 517-residue chain is DNA-(apurinic or apyrimidinic site) endonuclease 2 (517 aa).

The Mg(2+) site is built by N9 and E34. The short motif at 82–90 (EEGLSGVFC) is the Claspin-like CKB motif element. The active site involves Y142. Positions 183, 185, 299, and 300 each coordinate Mg(2+). Catalysis depends on D183, which acts as the Proton donor/acceptor. H300 functions as the Proton acceptor in the catalytic mechanism. A compositionally biased stretch (polar residues) spans 347–362 (GNTTEESSELTGTPSF). Residues 347–366 (GNTTEESSELTGTPSFTEGA) form a disordered region. Residues 395–402 (QGNLLSFF) carry the PCNA interacting protein (PIP) box motif. Zn(2+) is bound by residues C463, H466, C489, and C503. A GRF-type zinc finger spans residues 463–512 (CKGHSEPCVLRTVKKAGPNCGRQFYVCARPEGHSSNPQARCNFFLWLTKK).

This sequence belongs to the DNA repair enzymes AP/ExoA family. As to quaternary structure, interacts (via PIP box and GRF-type Zinc finger domain) with pcna; the interaction is required for 3 -5 SSB end resection, assembly of a checkpoint protein complex to SSB sites, and SSB signaling. Interacts with chek1. It depends on Mg(2+) as a cofactor. Mn(2+) is required as a cofactor. Expressed in eggs (at protein level).

It is found in the nucleus. The protein localises to the chromosome. The protein resides in the cytoplasm. Its subcellular location is the mitochondrion. It catalyses the reaction Exonucleolytic cleavage in the 3'- to 5'-direction to yield nucleoside 5'-phosphates.. Its activity is regulated as follows. 3'-5' nuclease activity is stimulated in presence of pcna. Functionally, functions as a weak apurinic/apyrimidinic (AP) endodeoxyribonuclease in the DNA base excision repair (BER) pathway of DNA lesions induced by oxidative and alkylating agents. Initiates repair of AP sites in DNA by catalyzing hydrolytic incision of the phosphodiester backbone immediately adjacent to the damage, generating a single-strand break with 5'-deoxyribose phosphate and 3'-hydroxyl ends. Exhibits 3'-5' exonuclease activity on a 3' DNA substrate; nuclease activity is stimulated by interaction with pcna. Has a preference for the 3' recessed ends over blunt-ended substrates, in both the presence and the absence of pcna. Generates single-stranded DNA (ssDNA) via 3'-5' single-strand break (SSB) end resection, thereby promoting a DNA damage response via replication protein A (rpa2)-binding to ssDNA and the recruitment of a checkpoint protein complex, including atr, atr-interacting protein atrip, and rad9, to damage sites following oxidative stress. Plays a role in reversing blocked 3' DNA ends, problematic lesions that preclude DNA synthesis. Required for chek1 phosphorylation induced by hydrogen peroxide but not by stalled replication forks. The sequence is that of DNA-(apurinic or apyrimidinic site) endonuclease 2 from Xenopus laevis (African clawed frog).